Here is a 454-residue protein sequence, read N- to C-terminus: tRNA modification GTPase MnmE (454 aa).

R23, E80, and K120 together coordinate (6S)-5-formyl-5,6,7,8-tetrahydrofolate. The TrmE-type G domain maps to 216 to 377 (GMKVVIAGRP…LRNHLKQSMG (162 aa)). K(+) is bound at residue N226. GTP-binding positions include 226–231 (NAGKSS), 245–251 (TDIAGTT), 270–273 (DTAG), 335–338 (NKAD), and 358–360 (SAR). S230 contacts Mg(2+). T245, I247, and T250 together coordinate K(+). Residue T251 participates in Mg(2+) binding. K454 is a (6S)-5-formyl-5,6,7,8-tetrahydrofolate binding site.

This sequence belongs to the TRAFAC class TrmE-Era-EngA-EngB-Septin-like GTPase superfamily. TrmE GTPase family. Homodimer. Heterotetramer of two MnmE and two MnmG subunits. Requires K(+) as cofactor.

It localises to the cytoplasm. Exhibits a very high intrinsic GTPase hydrolysis rate. Involved in the addition of a carboxymethylaminomethyl (cmnm) group at the wobble position (U34) of certain tRNAs, forming tRNA-cmnm(5)s(2)U34. The chain is tRNA modification GTPase MnmE from Klebsiella pneumoniae (strain 342).